An 875-amino-acid chain; its full sequence is Metal transporter CNNM2 (875 aa).

At 1-250 (MIGCGACEPE…TKMIVGEEKK (250 aa)) the chain is on the extracellular side. Asparagine 112 carries an N-linked (GlcNAc...) asparagine glycan. Residues 121–149 (TEHERRRHTPSERGLGGPAPPEPDSGPQR) form a disordered region. The helical transmembrane segment at 251–271 (FLLPFWLQVIFISLLLCLSGM) threads the bilayer. A CNNM transmembrane domain is found at 251-431 (FLLPFWLQVI…DPYNDLVKEE (181 aa)). Residues 272–313 (FSGLNLGLMALDPMELRIVQNCGTEKEKNYAKRIEPVRRQGN) lie on the Cytoplasmic side of the membrane. Positions 314–334 (YLLCSLLLGNVLVNTTLTILL) form an intramembrane region, helical. Topologically, residues 335 to 338 (DDIA) are cytoplasmic. A helical transmembrane segment spans residues 339 to 359 (GSGLVAVVVSTIGIVIFGEIV). Topologically, residues 360-368 (PQAICSRHG) are extracellular. A helical transmembrane segment spans residues 369-389 (LAVGANTIFLTKFFMMMTFPA). Over 390-875 (SYPVSKLLDC…NHSLHSEGAI (486 aa)) the chain is Cytoplasmic. CBS domains lie at 450–511 (MTPL…CTPL) and 518–584 (YNHP…ILDE). The interval 741-763 (AGSPGENKSPPRPCGLNHSDSLS) is disordered. Phosphoserine is present on serine 761.

This sequence belongs to the ACDP family. As to quaternary structure, isoform 1 and isoform 2 may interact with each other. In terms of processing, the N-terminus is cleaved within the endoplasmic reticulum. The signal peptidase complex seems to be involved in the processing, but the exact cleavage site has not been identified. Widely expressed, with highest levels in kidney, lung, spleen and testis. In the kidney, predominantly expressed in the distal convoluted tubule and, at lower levels, in the connecting tubule (at protein level).

Its subcellular location is the cell membrane. Functionally, divalent metal cation transporter. Mediates transport of divalent metal cations in an order of Mg(2+) &gt; Co(2+) &gt; Mn(2+) &gt; Sr(2+) &gt; Ba(2+) &gt; Cu(2+) &gt; Fe(2+). This Mus musculus (Mouse) protein is Metal transporter CNNM2 (Cnnm2).